Here is a 167-residue protein sequence, read N- to C-terminus: NADH-quinone oxidoreductase subunit B (167 aa).

[4Fe-4S] cluster contacts are provided by C40, C41, C105, and C134.

It belongs to the complex I 20 kDa subunit family. As to quaternary structure, NDH-1 is composed of 14 different subunits. Subunits NuoB, C, D, E, F, and G constitute the peripheral sector of the complex. [4Fe-4S] cluster serves as cofactor.

It localises to the cell inner membrane. The catalysed reaction is a quinone + NADH + 5 H(+)(in) = a quinol + NAD(+) + 4 H(+)(out). NDH-1 shuttles electrons from NADH, via FMN and iron-sulfur (Fe-S) centers, to quinones in the respiratory chain. The immediate electron acceptor for the enzyme in this species is believed to be ubiquinone. Couples the redox reaction to proton translocation (for every two electrons transferred, four hydrogen ions are translocated across the cytoplasmic membrane), and thus conserves the redox energy in a proton gradient. In Campylobacter jejuni subsp. jejuni serotype O:6 (strain 81116 / NCTC 11828), this protein is NADH-quinone oxidoreductase subunit B.